We begin with the raw amino-acid sequence, 441 residues long: Inositol hexakisphosphate kinase 1 (441 aa).

The segment at 100–175 (ETVEQDDTTE…MLDGNSGLSS (76 aa)) is disordered. The segment covering 113-123 (PRRKHSRRSLH) has biased composition (basic residues). Positions 137-149 (SLSLETSESSQEA) are enriched in low complexity. Residues 150–160 (KSPKVELHSHS) are compositionally biased toward basic and acidic residues. Serine 151 carries the phosphoserine modification. A substrate-binding site is contributed by 220-228 (PCVLDLKMG). The tract at residues 370-392 (SSCGPSTSPSNTSPEAGPSSQPK) is disordered. Residues 372–391 (CGPSTSPSNTSPEAGPSSQP) are compositionally biased toward polar residues.

This sequence belongs to the inositol phosphokinase (IPK) family.

The protein resides in the cytoplasm. It is found in the nucleus. The catalysed reaction is 1D-myo-inositol hexakisphosphate + ATP = 5-diphospho-1D-myo-inositol 1,2,3,4,6-pentakisphosphate + ADP. The enzyme catalyses 1-diphospho-1D-myo-inositol 2,3,4,5,6-pentakisphosphate + ATP + H(+) = 1,5-bis(diphospho)-1D-myo-inositol 2,3,4,6-tetrakisphosphate + ADP. Its function is as follows. Converts inositol hexakisphosphate (InsP6) to diphosphoinositol pentakisphosphate (InsP7/PP-InsP5). Converts 1,3,4,5,6-pentakisphosphate (InsP5) to PP-InsP4. This chain is Inositol hexakisphosphate kinase 1 (IP6K1), found in Homo sapiens (Human).